A 159-amino-acid polypeptide reads, in one-letter code: Ribosomal RNA large subunit methyltransferase H (159 aa).

Residues leucine 76, glycine 108, and 127–132 contribute to the S-adenosyl-L-methionine site; that span reads FSKMTF.

It belongs to the RNA methyltransferase RlmH family. In terms of assembly, homodimer.

Its subcellular location is the cytoplasm. The enzyme catalyses pseudouridine(1915) in 23S rRNA + S-adenosyl-L-methionine = N(3)-methylpseudouridine(1915) in 23S rRNA + S-adenosyl-L-homocysteine + H(+). Functionally, specifically methylates the pseudouridine at position 1915 (m3Psi1915) in 23S rRNA. The sequence is that of Ribosomal RNA large subunit methyltransferase H from Bacillus velezensis (strain DSM 23117 / BGSC 10A6 / LMG 26770 / FZB42) (Bacillus amyloliquefaciens subsp. plantarum).